A 221-amino-acid chain; its full sequence is MDVTGDTVPPANLRNEYAADLGLTESNLAGDWYTQFDRWFTEVVAAGLPEPNAMVLGTADRAGRPSARTVLLKGYDPDGFVLFTNYGSHKGTELAANPYASLVFPWFMLQRQVVVTGRVDRLDRAETEAYFASRPRGSQLGAWASEQSRVLPNRSALDDAYRAMAERYADGVPIPAPPNWGGFRLRPDGVEFWQGQASRLHDRLRFRSTDGGDWVVERLAP.

Substrate contacts are provided by residues 14–17 and lysine 73; that span reads RNEY. FMN-binding positions include 68–73, 83–84, lysine 90, and glutamine 112; these read RTVLLK and FT. Residues tyrosine 130, arginine 134, and serine 138 each contribute to the substrate site. FMN-binding positions include 147-148 and tryptophan 193; that span reads QS. 199–201 serves as a coordination point for substrate; it reads RLH. Arginine 203 is an FMN binding site.

This sequence belongs to the pyridoxamine 5'-phosphate oxidase family. Homodimer. FMN is required as a cofactor.

It carries out the reaction pyridoxamine 5'-phosphate + O2 + H2O = pyridoxal 5'-phosphate + H2O2 + NH4(+). It catalyses the reaction pyridoxine 5'-phosphate + O2 = pyridoxal 5'-phosphate + H2O2. It participates in cofactor metabolism; pyridoxal 5'-phosphate salvage; pyridoxal 5'-phosphate from pyridoxamine 5'-phosphate: step 1/1. It functions in the pathway cofactor metabolism; pyridoxal 5'-phosphate salvage; pyridoxal 5'-phosphate from pyridoxine 5'-phosphate: step 1/1. In terms of biological role, catalyzes the oxidation of either pyridoxine 5'-phosphate (PNP) or pyridoxamine 5'-phosphate (PMP) into pyridoxal 5'-phosphate (PLP). The sequence is that of Pyridoxine/pyridoxamine 5'-phosphate oxidase from Salinispora arenicola (strain CNS-205).